The sequence spans 119 residues: Large ribosomal subunit protein bL17 (119 aa).

Belongs to the bacterial ribosomal protein bL17 family. In terms of assembly, part of the 50S ribosomal subunit. Contacts protein L32.

This is Large ribosomal subunit protein bL17 from Psychrobacter sp. (strain PRwf-1).